Consider the following 133-residue polypeptide: Small ribosomal subunit protein bS16 (133 aa).

The disordered stretch occupies residues 99-133 (EKWQQNQTERRQKRLAVKTRRRQAKKAAEAKGAEA). A compositionally biased stretch (basic residues) spans 109–123 (RQKRLAVKTRRRQAK). The span at 124–133 (KAAEAKGAEA) shows a compositional bias: basic and acidic residues.

The protein belongs to the bacterial ribosomal protein bS16 family.

The sequence is that of Small ribosomal subunit protein bS16 from Chlorobium limicola (strain DSM 245 / NBRC 103803 / 6330).